A 160-amino-acid polypeptide reads, in one-letter code: H/ACA ribonucleoprotein complex subunit 2-like protein (160 aa).

The protein belongs to the eukaryotic ribosomal protein eL8 family. As to quaternary structure, component of the small nucleolar ribonucleoprotein particle containing H/ACA-type snoRNAs (H/ACA snoRNPs).

It localises to the nucleus. Its subcellular location is the nucleolus. Required for ribosome biogenesis. Part of a complex which catalyzes pseudouridylation of rRNA. This involves the isomerization of uridine such that the ribose is subsequently attached to C5, instead of the normal N1. Pseudouridine ('psi') residues may serve to stabilize the conformation of rRNAs. The chain is H/ACA ribonucleoprotein complex subunit 2-like protein (NHP2) from Drosophila yakuba (Fruit fly).